The chain runs to 165 residues: 6,7-dimethyl-8-ribityllumazine synthase (165 aa).

Residues phenylalanine 24, alanine 62–glutamate 64, and alanine 86–isoleucine 88 each bind 5-amino-6-(D-ribitylamino)uracil. Aspartate 91–threonine 92 provides a ligand contact to (2S)-2-hydroxy-3-oxobutyl phosphate. Histidine 94 serves as the catalytic Proton donor. 5-amino-6-(D-ribitylamino)uracil is bound at residue phenylalanine 119. Residue arginine 133 participates in (2S)-2-hydroxy-3-oxobutyl phosphate binding.

It belongs to the DMRL synthase family.

The enzyme catalyses (2S)-2-hydroxy-3-oxobutyl phosphate + 5-amino-6-(D-ribitylamino)uracil = 6,7-dimethyl-8-(1-D-ribityl)lumazine + phosphate + 2 H2O + H(+). It participates in cofactor biosynthesis; riboflavin biosynthesis; riboflavin from 2-hydroxy-3-oxobutyl phosphate and 5-amino-6-(D-ribitylamino)uracil: step 1/2. Its function is as follows. Catalyzes the formation of 6,7-dimethyl-8-ribityllumazine by condensation of 5-amino-6-(D-ribitylamino)uracil with 3,4-dihydroxy-2-butanone 4-phosphate. This is the penultimate step in the biosynthesis of riboflavin. The polypeptide is 6,7-dimethyl-8-ribityllumazine synthase (Prochlorococcus marinus (strain MIT 9303)).